Consider the following 247-residue polypeptide: tRNA (guanine-N(1)-)-methyltransferase (247 aa).

Residues glycine 112 and 131–136 (LGDFVL) each bind S-adenosyl-L-methionine.

Belongs to the RNA methyltransferase TrmD family. In terms of assembly, homodimer.

Its subcellular location is the cytoplasm. The enzyme catalyses guanosine(37) in tRNA + S-adenosyl-L-methionine = N(1)-methylguanosine(37) in tRNA + S-adenosyl-L-homocysteine + H(+). In terms of biological role, specifically methylates guanosine-37 in various tRNAs. In Syntrophotalea carbinolica (strain DSM 2380 / NBRC 103641 / GraBd1) (Pelobacter carbinolicus), this protein is tRNA (guanine-N(1)-)-methyltransferase.